Consider the following 567-residue polypeptide: Proline--tRNA ligase (567 aa).

The protein belongs to the class-II aminoacyl-tRNA synthetase family. ProS type 1 subfamily. As to quaternary structure, homodimer.

It localises to the cytoplasm. It carries out the reaction tRNA(Pro) + L-proline + ATP = L-prolyl-tRNA(Pro) + AMP + diphosphate. Functionally, catalyzes the attachment of proline to tRNA(Pro) in a two-step reaction: proline is first activated by ATP to form Pro-AMP and then transferred to the acceptor end of tRNA(Pro). As ProRS can inadvertently accommodate and process non-cognate amino acids such as alanine and cysteine, to avoid such errors it has two additional distinct editing activities against alanine. One activity is designated as 'pretransfer' editing and involves the tRNA(Pro)-independent hydrolysis of activated Ala-AMP. The other activity is designated 'posttransfer' editing and involves deacylation of mischarged Ala-tRNA(Pro). The misacylated Cys-tRNA(Pro) is not edited by ProRS. The polypeptide is Proline--tRNA ligase (Staphylococcus epidermidis (strain ATCC 35984 / DSM 28319 / BCRC 17069 / CCUG 31568 / BM 3577 / RP62A)).